The chain runs to 474 residues: Glutamate--tRNA ligase (474 aa).

Residues 9–19 carry the 'HIGH' region motif; sequence PSPTGYLHVGG. The 'KMSKS' region signature appears at 240 to 244; it reads KLSKR. Residue Lys243 coordinates ATP.

Belongs to the class-I aminoacyl-tRNA synthetase family. Glutamate--tRNA ligase type 1 subfamily. In terms of assembly, monomer.

The protein resides in the cytoplasm. The catalysed reaction is tRNA(Glu) + L-glutamate + ATP = L-glutamyl-tRNA(Glu) + AMP + diphosphate. Catalyzes the attachment of glutamate to tRNA(Glu) in a two-step reaction: glutamate is first activated by ATP to form Glu-AMP and then transferred to the acceptor end of tRNA(Glu). The polypeptide is Glutamate--tRNA ligase (Vibrio parahaemolyticus serotype O3:K6 (strain RIMD 2210633)).